Reading from the N-terminus, the 322-residue chain is MWEKVDQLTPSRYSPYRFFSAQEWAAFRADTPLTLTYEEVKRLRSLGDPIDLDEVRRIYLSLSRLLYAHVEASQLLFRQRQQFLNMEESYKTPFIIGVAGSVAVGKSTMARILKELLARWPSSPKVDLVTTDGFLYPNAVLREQNMMERKGFPESYDIGAVLRFLSAIKAGMSRVRAPLYSHLSYDVLPGEYQIVDKPDILIFEGINVLQVRDLPEDGKMVPFVSDFFDFSIYIDADPRLIHKWYIDRFMRLRETAFRDPQSFFHRYSQLSQEAARSIAEGLWQNINLKNLNENILPTRPRADLILRKGSDHLIEEVALRKI.

100–107 (GSVAVGKS) lines the ATP pocket.

This sequence belongs to the prokaryotic pantothenate kinase family.

The protein resides in the cytoplasm. The enzyme catalyses (R)-pantothenate + ATP = (R)-4'-phosphopantothenate + ADP + H(+). It participates in cofactor biosynthesis; coenzyme A biosynthesis; CoA from (R)-pantothenate: step 1/5. This chain is Pantothenate kinase, found in Brucella canis (strain ATCC 23365 / NCTC 10854 / RM-666).